The following is an 83-amino-acid chain: Cytochrome b559 subunit alpha (83 aa).

Residues 21 to 35 (VIHSITIPSLFIAGW) traverse the membrane as a helical segment. H23 serves as a coordination point for heme.

Belongs to the PsbE/PsbF family. As to quaternary structure, heterodimer of an alpha subunit and a beta subunit. PSII is composed of 1 copy each of membrane proteins PsbA, PsbB, PsbC, PsbD, PsbE, PsbF, PsbH, PsbI, PsbJ, PsbK, PsbL, PsbM, PsbT, PsbX, PsbY, PsbZ, Psb30/Ycf12, at least 3 peripheral proteins of the oxygen-evolving complex and a large number of cofactors. It forms dimeric complexes. It depends on heme b as a cofactor.

The protein resides in the plastid. The protein localises to the chloroplast thylakoid membrane. Its function is as follows. This b-type cytochrome is tightly associated with the reaction center of photosystem II (PSII). PSII is a light-driven water:plastoquinone oxidoreductase that uses light energy to abstract electrons from H(2)O, generating O(2) and a proton gradient subsequently used for ATP formation. It consists of a core antenna complex that captures photons, and an electron transfer chain that converts photonic excitation into a charge separation. This chain is Cytochrome b559 subunit alpha, found in Piper cenocladum (Ant piper).